Here is a 404-residue protein sequence, read N- to C-terminus: Argininosuccinate synthase (404 aa).

ATP is bound by residues 11 to 19 and Ala-38; that span reads AYSGGLDTS. The L-citrulline site is built by Tyr-91 and Ser-96. Residue Gly-121 coordinates ATP. Residues Thr-123, Asn-127, and Asp-128 each coordinate L-aspartate. Asn-127 contacts L-citrulline. Residues Arg-131, Ser-182, Ser-191, Glu-267, and Tyr-279 each coordinate L-citrulline.

This sequence belongs to the argininosuccinate synthase family. Type 1 subfamily. Homotetramer.

Its subcellular location is the cytoplasm. The catalysed reaction is L-citrulline + L-aspartate + ATP = 2-(N(omega)-L-arginino)succinate + AMP + diphosphate + H(+). The protein operates within amino-acid biosynthesis; L-arginine biosynthesis; L-arginine from L-ornithine and carbamoyl phosphate: step 2/3. The chain is Argininosuccinate synthase from Paramagnetospirillum magneticum (strain ATCC 700264 / AMB-1) (Magnetospirillum magneticum).